A 529-amino-acid polypeptide reads, in one-letter code: UDP-glucuronosyltransferase 2B18 (529 aa).

Residues 1–21 (MSVKWTSVILLIQLSFYFSSG) form the signal peptide. N-linked (GlcNAc...) asparagine glycosylation is found at asparagine 67 and asparagine 68. Residues 493-513 (VIGFLLACVATVIFIIMKCCL) traverse the membrane as a helical segment.

The protein belongs to the UDP-glycosyltransferase family. As to expression, expressed in liver, prostate, kidney, testis, adrenal, bile duct, bladder, colon, small intestine, cerebellum and pancreas.

Its subcellular location is the microsome membrane. It localises to the endoplasmic reticulum membrane. The catalysed reaction is glucuronate acceptor + UDP-alpha-D-glucuronate = acceptor beta-D-glucuronoside + UDP + H(+). Its function is as follows. UDPGT is of major importance in the conjugation and subsequent elimination of potentially toxic xenobiotics and endogenous compounds. This isozyme displays activity toward 3-hydroxyandrogens. It is principally active on C19 steroids having a hydroxyl group at position 3-alpha of the steroid molecule and also active on planar phenols and bile acids. This is UDP-glucuronosyltransferase 2B18 (UGT2B18) from Macaca fascicularis (Crab-eating macaque).